Reading from the N-terminus, the 198-residue chain is Glycerol-3-phosphate acyltransferase (198 aa).

The next 5 membrane-spanning stretches (helical) occupy residues 2 to 22 (IIDL…FGVL), 53 to 73 (LGFI…VIAT), 79 to 99 (PFMY…SCFL), 113 to 133 (VLIP…TFFI), and 152 to 172 (IILF…IMAL).

It belongs to the PlsY family. In terms of assembly, probably interacts with PlsX.

Its subcellular location is the cell membrane. The enzyme catalyses an acyl phosphate + sn-glycerol 3-phosphate = a 1-acyl-sn-glycero-3-phosphate + phosphate. Its pathway is lipid metabolism; phospholipid metabolism. In terms of biological role, catalyzes the transfer of an acyl group from acyl-phosphate (acyl-PO(4)) to glycerol-3-phosphate (G3P) to form lysophosphatidic acid (LPA). This enzyme utilizes acyl-phosphate as fatty acyl donor, but not acyl-CoA or acyl-ACP. This is Glycerol-3-phosphate acyltransferase from Lawsonia intracellularis (strain PHE/MN1-00).